We begin with the raw amino-acid sequence, 424 residues long: Adenylosuccinate synthetase (424 aa).

GTP is bound by residues 12-18 (GDEGKGK) and 40-42 (GHT). D13 serves as the catalytic Proton acceptor. D13 and G40 together coordinate Mg(2+). IMP-binding positions include 13 to 16 (DEGK), 38 to 41 (NAGH), T130, R144, N220, T235, and R299. H41 (proton donor) is an active-site residue. 295 to 301 (VTTGRRR) serves as a coordination point for substrate. GTP is bound by residues R301, 327-329 (KLD), and 412-414 (GTG).

This sequence belongs to the adenylosuccinate synthetase family. In terms of assembly, homodimer. It depends on Mg(2+) as a cofactor.

Its subcellular location is the cytoplasm. The enzyme catalyses IMP + L-aspartate + GTP = N(6)-(1,2-dicarboxyethyl)-AMP + GDP + phosphate + 2 H(+). Its pathway is purine metabolism; AMP biosynthesis via de novo pathway; AMP from IMP: step 1/2. Plays an important role in the de novo pathway and in the salvage pathway of purine nucleotide biosynthesis. Catalyzes the first committed step in the biosynthesis of AMP from IMP. The polypeptide is Adenylosuccinate synthetase (Aspergillus fumigatus (strain CBS 144.89 / FGSC A1163 / CEA10) (Neosartorya fumigata)).